We begin with the raw amino-acid sequence, 192 residues long: UPF0149 protein YgfB (192 aa).

The protein belongs to the UPF0149 family.

This chain is UPF0149 protein YgfB, found in Salmonella typhi.